An 84-amino-acid chain; its full sequence is Small ribosomal subunit protein bS16 (84 aa).

Belongs to the bacterial ribosomal protein bS16 family.

The sequence is that of Small ribosomal subunit protein bS16 from Desulforapulum autotrophicum (strain ATCC 43914 / DSM 3382 / VKM B-1955 / HRM2) (Desulfobacterium autotrophicum).